The sequence spans 134 residues: uncharacterized protein (134 aa).

3 helical membrane passes run phenylalanine 21–isoleucine 41, leucine 52–glutamate 72, and isoleucine 95–isoleucine 115.

The protein localises to the host membrane. This is an uncharacterized protein from Acidianus two-tailed virus (ATV).